A 541-amino-acid chain; its full sequence is MAGAIIENMSTKKLCIVGGILLVFQIVAFLVGGLIAPAPTTAVPYTAIKCVDVRKNHHKTRWLAPWGPNKCDKIRDIEEAIPREIEANDIVFSVHIPLPSMEMSPWFQFMLFILQLDIAFKLNNQIRENAEISMDVSLGYRDDMFSEWTEMAHERVPRKLKCTFTSPKTPEHEGRYYNCDVLPFMEIGSVAHKYYLLNIRLPVNEKKKINVGIGEIKDIRLVGIHQNGGFTKVWFAMKTFLTPSIFIIMVWYWRRITMMSRPPVLLEKVIFALGISMTFINIPVEWFSIGFDWTWMLLFGDIRQGIFYAMLLSFWIIFCGEHMMDQHERNHIAGYWKQVGPIAVGSFCLFIFDMCERGVQLTNPFYSIWTTDVGTELAMAFIIVAGICLCLYFLFLCFMVFQVFRNISGKQSSLPAMSKVRRLHYEGLIFRFKFLMLITLACAAMTVIFFIVSQVSEGHWKWGGVTVQVSSAFFTGIYGMWNLYVFALMFLYAPSHKNYGEDQSNGDLGVHSGEELQLTTTITHVDGPTEIYKLTRKEAQE.

The Cytoplasmic segment spans residues 1 to 15 (MAGAIIENMSTKKLC). The chain crosses the membrane as a helical span at residues 16–36 (IVGGILLVFQIVAFLVGGLIA). Residues 37-232 (PAPTTAVPYT…GIHQNGGFTK (196 aa)) lie on the Lumenal side of the membrane. An interaction with Wnt proteins region spans residues 101 to 232 (MEMSPWFQFM…GIHQNGGFTK (132 aa)). Residues 233–253 (VWFAMKTFLTPSIFIIMVWYW) traverse the membrane as a helical segment. The Cytoplasmic segment spans residues 254–268 (RRITMMSRPPVLLEK). The helical transmembrane segment at 269–289 (VIFALGISMTFINIPVEWFSI) threads the bilayer. Residues 290–303 (GFDWTWMLLFGDIR) are Lumenal-facing. A helical membrane pass occupies residues 304–324 (QGIFYAMLLSFWIIFCGEHMM). The Cytoplasmic portion of the chain corresponds to 325-331 (DQHERNH). Residues 332–352 (IAGYWKQVGPIAVGSFCLFIF) form a helical membrane-spanning segment. At 353 to 380 (DMCERGVQLTNPFYSIWTTDVGTELAMA) the chain is on the lumenal side. The chain crosses the membrane as a helical span at residues 381-401 (FIIVAGICLCLYFLFLCFMVF). Residues 402–431 (QVFRNISGKQSSLPAMSKVRRLHYEGLIFR) lie on the Cytoplasmic side of the membrane. A helical transmembrane segment spans residues 432 to 452 (FKFLMLITLACAAMTVIFFIV). The Lumenal portion of the chain corresponds to 453–471 (SQVSEGHWKWGGVTVQVSS). A helical membrane pass occupies residues 472–492 (AFFTGIYGMWNLYVFALMFLY). Over 493 to 541 (APSHKNYGEDQSNGDLGVHSGEELQLTTTITHVDGPTEIYKLTRKEAQE) the chain is Cytoplasmic.

Belongs to the wntless family. In terms of assembly, interacts with WNT3A. Interacts with WNT1, WNT3 and WNT5. Post-translationally, N-glycosylated. In terms of tissue distribution, expressed in the brain, skeletal muscle, heart muscle, lung, gut, liver, and kidney (at protein level). In the brain, expressed in the cortex, striatum, hippocampus and to a lesser extent in the cerebellum (at protein level). Expressed in kidney, lung, skin, intestine, brain, spinal cord, skeleton, eyes, excretion glands, tooth and palatal shelves. In the cerebellum, expressed in Purkinje cells.

It is found in the golgi apparatus membrane. The protein localises to the cytoplasmic vesicle membrane. It localises to the cell membrane. The protein resides in the endoplasmic reticulum membrane. Its subcellular location is the early endosome membrane. Regulates Wnt proteins sorting and secretion in a feedback regulatory mechanism. This reciprocal interaction plays a key role in the regulation of expression, subcellular location, binding and organelle-specific association of Wnt proteins. Also plays an important role in establishment of the anterior-posterior body axis formation during development. This is Protein wntless homolog (Wls) from Mus musculus (Mouse).